Reading from the N-terminus, the 317-residue chain is Melanocyte-stimulating hormone receptor (317 aa).

Residues 1–26 (MPVQGSPRSLLGAVNSTPTATPHLRP) form a disordered region. The Extracellular portion of the chain corresponds to 1–37 (MPVQGSPRSLLGAVNSTPTATPHLRPAANQTGPQCLE). The N-linked (GlcNAc...) asparagine glycan is linked to Asn29. The chain crosses the membrane as a helical span at residues 38–63 (VSIPDGLFLCLGLVSLVENTLVVAAI). At 64-72 (AKNRNLHSP) the chain is on the cytoplasmic side. A helical membrane pass occupies residues 73 to 93 (MYCFVCCLALSDLLVSVSSVL). Topologically, residues 94-118 (ETAVLLLLGAGALAAQATVVQLLGN) are extracellular. Residues 119–140 (VIDVLLCSSMVSSLFFLGAIAM) form a helical membrane-spanning segment. Residues 141–163 (DRYISIFYALRYHSIVTLARARR) are Cytoplasmic-facing. A helical membrane pass occupies residues 164–183 (AIAAIWAASMLSSTLFIAYC). Topologically, residues 184 to 191 (DHTAALLC) are extracellular. Residues 192 to 211 (LVVFFLAMLVLMAVLYVHML) traverse the membrane as a helical segment. The Cytoplasmic segment spans residues 212–240 (TQACQHAQGIARLHKRQRPVQQGWGLKGA). Residues 241 to 266 (ATLAILLGVFFLCWGPFFLHLTLIAV) form a helical membrane-spanning segment. Residues 267-279 (CPQHPTCSCIFKN) are Extracellular-facing. The helical transmembrane segment at 280–300 (FRLFLALIVCNAIVDPLIYAF) threads the bilayer. Residues 301 to 317 (RSQELCKTLKELLLFSW) are Cytoplasmic-facing.

Belongs to the G-protein coupled receptor 1 family. In terms of assembly, interacts with MGRN1, but does not undergo MGRN1-mediated ubiquitination; this interaction competes with GNAS-binding and thus inhibits agonist-induced cAMP production. Interacts with OPN3; the interaction results in a decrease in MC1R-mediated cAMP signaling and ultimately a decrease in melanin production in melanocytes.

It is found in the cell membrane. Functionally, receptor for MSH (alpha, beta and gamma) and ACTH. The activity of this receptor is mediated by G proteins which activate adenylate cyclase. Mediates melanogenesis, the production of eumelanin (black/brown) and phaeomelanin (red/yellow), via regulation of cAMP signaling in melanocytes. The protein is Melanocyte-stimulating hormone receptor (MC1R) of Hapalemur griseus (Gray gentle lemur).